Here is a 645-residue protein sequence, read N- to C-terminus: Aspartate--tRNA ligase, mitochondrial (645 aa).

The transit peptide at 1 to 47 (MYFPSWLSQLYRGLSRPIRRTTQPIWGSLYRSLLQSSQRRIPEFSSF) directs the protein to the mitochondrion. Thr-219 is subject to Phosphothreonine. The residue at position 242 (Ser-242) is a Phosphoserine. The aspartate stretch occupies residues 244 to 247 (QQFK). Arg-266 lines the L-aspartate pocket. 266–268 (RDE) is an ATP binding site. Lys-382 bears the N6-acetyllysine mark. Glu-535 is a binding site for ATP. Arg-542 lines the L-aspartate pocket. 584–587 (GLDR) is a binding site for ATP.

It belongs to the class-II aminoacyl-tRNA synthetase family. Type 1 subfamily. As to quaternary structure, homodimer.

It is found in the mitochondrion matrix. Its subcellular location is the mitochondrion membrane. It carries out the reaction tRNA(Asp) + L-aspartate + ATP = L-aspartyl-tRNA(Asp) + AMP + diphosphate. Catalyzes the attachment of aspartate to tRNA(Asp) in a two-step reaction: aspartate is first activated by ATP to form Asp-AMP and then transferred to the acceptor end of tRNA(Asp). The chain is Aspartate--tRNA ligase, mitochondrial (DARS2) from Homo sapiens (Human).